A 124-amino-acid polypeptide reads, in one-letter code: Small ribosomal subunit protein uS12 (124 aa).

The tract at residues 1–23 is disordered; that stretch reads MATINQLVRKPRKRPVAKSDVPA. 3-methylthioaspartic acid is present on Asp89. A disordered region spans residues 101–124; it reads ALDTSGVQNRRQGRSKYGTKRPKS. Residues 111–124 show a composition bias toward basic residues; the sequence is RQGRSKYGTKRPKS.

The protein belongs to the universal ribosomal protein uS12 family. As to quaternary structure, part of the 30S ribosomal subunit. Contacts proteins S8 and S17. May interact with IF1 in the 30S initiation complex.

Functionally, with S4 and S5 plays an important role in translational accuracy. Its function is as follows. Interacts with and stabilizes bases of the 16S rRNA that are involved in tRNA selection in the A site and with the mRNA backbone. Located at the interface of the 30S and 50S subunits, it traverses the body of the 30S subunit contacting proteins on the other side and probably holding the rRNA structure together. The combined cluster of proteins S8, S12 and S17 appears to hold together the shoulder and platform of the 30S subunit. This is Small ribosomal subunit protein uS12 from Chromohalobacter salexigens (strain ATCC BAA-138 / DSM 3043 / CIP 106854 / NCIMB 13768 / 1H11).